We begin with the raw amino-acid sequence, 187 residues long: Major allergen Equ c 1 (187 aa).

Residues 1–15 (MKLLLLCLGLILVCA) constitute a signal peptide (or 16, or 21). N-linked (GlcNAc...) asparagine glycans are attached at residues Asn-53 and Asn-68. An intrachain disulfide couples Cys-83 to Cys-176.

It belongs to the calycin superfamily. Lipocalin family. In terms of assembly, homodimer. In terms of processing, several N-terminal ends may be due to cleavage by signal peptidase at different sites or may be generated by proteolytic processing of the secreted protein. Analysis of the sugar composition shows the presence of GalNAc, Gal, NeuAc, GlcNAc, and Man. May be also O-glycosylated. Expressed in liver and in sublingual and submaxillary salivary glands. Highly concentrated in secretory fluid such as saliva and urine as well as in hair dandruff extract.

Its subcellular location is the secreted. This is Major allergen Equ c 1 from Equus caballus (Horse).